Here is a 204-residue protein sequence, read N- to C-terminus: Chaperone protein TorD (204 aa).

Belongs to the TorD/DmsD family. TorD subfamily.

It is found in the cytoplasm. In terms of biological role, involved in the biogenesis of TorA. Acts on TorA before the insertion of the molybdenum cofactor and, as a result, probably favors a conformation of the apoenzyme that is competent for acquiring the cofactor. This chain is Chaperone protein TorD, found in Shewanella baltica (strain OS223).